Here is a 74-residue protein sequence, read N- to C-terminus: CLAVATA3/ESR (CLE)-related protein 1 (74 aa).

The first 22 residues, 1–22 (MANLKFLLCLFLICVSLSRSSA), serve as a signal peptide directing secretion. N59 carries an N-linked (GlcNAc...) asparagine glycan. Hydroxyproline is present on residues P66 and P69. The O-linked (Ara...) hydroxyproline glycan is linked to P69.

The protein belongs to the CLV3/ESR signal peptide family. In terms of processing, the O-glycosylation (arabinosylation) of the hydroxyproline Pro-69 enhances binding affinity of the CLE1p peptide for its receptor. In terms of tissue distribution, mostly expressed in roots and seedlings, and, to a lower extent, in stems and apex.

It localises to the secreted. It is found in the extracellular space. Extracellular signal peptide that regulates cell fate. The sequence is that of CLAVATA3/ESR (CLE)-related protein 1 from Arabidopsis thaliana (Mouse-ear cress).